The following is a 740-amino-acid chain: Eukaryotic translation initiation factor 3 subunit B (740 aa).

Residues 1–10 (MAPSFDTLSE) are compositionally biased toward polar residues. A disordered region spans residues 1-20 (MAPSFDTLSEQDLHEEEEEE). The 87-residue stretch at 40–126 (TFVVIDGLPV…HTLLVNKLMD (87 aa)) folds into the RRM domain. 6 WD repeats span residues 193–230 (AHWTQLFVQWSPKGTYLASVHPQGVQLWGGPAFSKQKQ), 232–289 (PHPF…RSFV), 302–343 (EPKK…LLGK), 455–496 (SLKD…SFFA), 513–556 (IEKK…EKPE), and 571–609 (TEHYGVTDIDWDPTGRYVVSSASVWTHQLENGWNLHTFA). The segment at 696 to 721 (AYGLPEEADDPKLAKDAAATTQEQGE) is disordered.

Belongs to the eIF-3 subunit B family. In terms of assembly, component of the eukaryotic translation initiation factor 3 (eIF-3) complex.

It localises to the cytoplasm. RNA-binding component of the eukaryotic translation initiation factor 3 (eIF-3) complex, which is involved in protein synthesis of a specialized repertoire of mRNAs and, together with other initiation factors, stimulates binding of mRNA and methionyl-tRNAi to the 40S ribosome. The eIF-3 complex specifically targets and initiates translation of a subset of mRNAs involved in cell proliferation. The sequence is that of Eukaryotic translation initiation factor 3 subunit B (prt1) from Aspergillus fumigatus (strain ATCC MYA-4609 / CBS 101355 / FGSC A1100 / Af293) (Neosartorya fumigata).